The primary structure comprises 182 residues: Glycerol-3-phosphate acyltransferase 1 (182 aa).

Helical transmembrane passes span 5-25 (MQFL…AYIV), 54-74 (GYFI…VAVA), 81-101 (PTFV…PVLF), 117-137 (IAFD…FYLI), and 157-177 (ILYS…VLIL).

The protein belongs to the PlsY family. Probably interacts with PlsX.

The protein localises to the cell membrane. The enzyme catalyses an acyl phosphate + sn-glycerol 3-phosphate = a 1-acyl-sn-glycero-3-phosphate + phosphate. It functions in the pathway lipid metabolism; phospholipid metabolism. In terms of biological role, catalyzes the transfer of an acyl group from acyl-phosphate (acyl-PO(4)) to glycerol-3-phosphate (G3P) to form lysophosphatidic acid (LPA). This enzyme utilizes acyl-phosphate as fatty acyl donor, but not acyl-CoA or acyl-ACP. This is Glycerol-3-phosphate acyltransferase 1 from Bacillus cereus (strain ATCC 14579 / DSM 31 / CCUG 7414 / JCM 2152 / NBRC 15305 / NCIMB 9373 / NCTC 2599 / NRRL B-3711).